The sequence spans 82 residues: Small ribosomal subunit protein bS16c (82 aa).

Belongs to the bacterial ribosomal protein bS16 family.

Its subcellular location is the plastid. It is found in the chloroplast. In Porphyra purpurea (Red seaweed), this protein is Small ribosomal subunit protein bS16c.